The sequence spans 460 residues: Gastric inhibitory polypeptide receptor (460 aa).

An N-terminal signal peptide occupies residues methionine 1–alanine 18. The Extracellular segment spans residues glutamate 19 to glutamine 134. Disulfide bonds link cysteine 42/cysteine 66, cysteine 57/cysteine 99, and cysteine 80/cysteine 114. N-linked (GlcNAc...) asparagine glycosylation is found at asparagine 58, asparagine 68, and asparagine 73. Residues isoleucine 135–leucine 155 traverse the membrane as a helical segment. Over serine 156–asparagine 166 the chain is Cytoplasmic. A helical membrane pass occupies residues tyrosine 167–threonine 185. The Extracellular portion of the chain corresponds to arginine 186–cysteine 222. The chain crosses the membrane as a helical span at residues valine 223–isoleucine 243. Residues valine 244–tyrosine 255 are Cytoplasmic-facing. A helical membrane pass occupies residues leucine 256–leucine 276. Residues arginine 277–threonine 297 lie on the Extracellular side of the membrane. The chain crosses the membrane as a helical span at residues proline 298–valine 318. Topologically, residues serine 319 to arginine 337 are cytoplasmic. A helical transmembrane segment spans residues serine 338 to glutamate 358. Topologically, residues glutamate 359 to leucine 370 are extracellular. A helical transmembrane segment spans residues alanine 371–isoleucine 391. Residues asparagine 392–cysteine 460 lie on the Cytoplasmic side of the membrane.

It belongs to the G-protein coupled receptor 2 family. May form homodimers and heterodimers with GLP1R. Post-translationally, N-glycosylation is required for cell surface expression and lengthens receptor half-life by preventing degradation in the ER.

The protein resides in the cell membrane. Functionally, this is a receptor for GIP. The activity of this receptor is mediated by G proteins which activate adenylyl cyclase. This is Gastric inhibitory polypeptide receptor (Gipr) from Mus musculus (Mouse).